The sequence spans 213 residues: Putative transmembrane protein DDB_G0267860 (213 aa).

Positions 1–22 (MKTKILLLNFIIIFFLINVNLA) are cleaved as a signal peptide. The Extracellular segment spans residues 23 to 191 (IKKDSPFKEI…SSKFDSSTSS (169 aa)). N-linked (GlcNAc...) asparagine glycans are attached at residues N92 and N114. Residues 192 to 212 (ISINTLAILSLLFLIFINKLI) traverse the membrane as a helical segment. A topological domain (cytoplasmic) is located at residue N213.

The protein resides in the membrane. This Dictyostelium discoideum (Social amoeba) protein is Putative transmembrane protein DDB_G0267860.